The chain runs to 480 residues: Ciliated left-right organizer protein containing ZP-N domains homolog (480 aa).

The signal sequence occupies residues 1–23 (MKNQHNTFWVLCLLFVMFDETFS).

As to expression, expressed specifically by cells of the ciliated left-right organizer.

The protein localises to the secreted. This Xenopus tropicalis (Western clawed frog) protein is Ciliated left-right organizer protein containing ZP-N domains homolog.